Consider the following 612-residue polypeptide: MRIVFVHPNYHSGGAEIAGSWPPAWVAYLCGALKKAGYTDYHFIDAMTDYVSHEKLAEKLRELQPDIVATTAITPSIYVAEETLKVAMEVVPNALRVLGGIHATFMFRQVLEEAPWIDVIVRGEGEEVLVNLVKAYEADNFAETRRQVKGLAFLDGDEIVSTAAAPTIRDVDSIDPDWGIINWKNYIYEPLGVRVAIPNMARGCPFTCSFCSQWKFWRDYRVRDPKKVVDEIEKLVNEHGVGFFILADEEPTINRKKFIEFCEEMIARGLPDKVKWGINTRVTDVKRDKELLKFYRKAGLVHISLGTEAAAQLKLDVFNKETTVAENKEAIRLLREADIFTEAQFIVGLDNETKETLEETYRMAWDWQPDLANWSMYTPWPFTPLFQELRDQVEVFDYSKYNFVTPIMKPKALTRGELLDGVMNNYRRFYMKKALFHYPWRGTGFRRRYLLGCLKAFLKAGVGRTFYDLGKAGYWGPQSKDKVDFHFDETRKIGNAQMADWEASADRAAKAAERREALRVQGKARAEERNAAKAEAAPILTAGGGGCGGHADGSDCGCGGKKQQQVDEFHVPMACGGGRQQMAEDEFAMPMACGGGKQQMEEAEERLVRPAE.

The 135-residue stretch at Asn-9–Glu-143 folds into the B12-binding domain. One can recognise a Radical SAM core domain in the interval Pro-190–Glu-417. Cys-204, Cys-208, and Cys-211 together coordinate [4Fe-4S] cluster.

Belongs to the BchE family. The cofactor is [4Fe-4S] cluster. Adenosylcob(III)alamin serves as cofactor.

It carries out the reaction Mg-protoporphyrin IX 13-monomethyl ester + 3 S-adenosyl-L-methionine + H2O = 3,8-divinyl protochlorophyllide a + 3 5'-deoxyadenosine + 3 L-methionine + 4 H(+). It functions in the pathway porphyrin-containing compound metabolism; bacteriochlorophyll biosynthesis (light-independent). In terms of biological role, involved in the tetrapyrrole biosynthetic pathways leading to chlorophyll and bacteriochlorophyll (BChl). Catalyzes the anaerobic formation of the isocyclic ring (E-ring) in Mg-protoporphyrin monomethyl ester (MPE) to yield protochlorophyllide a (PChlide a) via a six-electron oxidation and the formation of an oxo group at position C13 using oxygen from a water molecule. The polypeptide is Anaerobic magnesium-protoporphyrin IX monomethyl ester cyclase (Cereibacter sphaeroides (strain ATCC 17023 / DSM 158 / JCM 6121 / CCUG 31486 / LMG 2827 / NBRC 12203 / NCIMB 8253 / ATH 2.4.1.) (Rhodobacter sphaeroides)).